Reading from the N-terminus, the 206-residue chain is MARGKFITFEGIDGAGKTTHLQWFCERLQAKLAAGDRQVVVTREPGGTPLGEALREMLLNQPMDLETEALLMFAARREHLARVIEPALARGDWVVSDRFTDATFAYQGGGRGLPRDKLEALERWVQGGFQPDLTVLFDVAPQVASERRGAARAPDKFESETDAFFTRTRDEYLRRAQEAPHRFTIVDATQTIPEIRGRLERVLAAL.

11–18 (GIDGAGKT) contributes to the ATP binding site.

The protein belongs to the thymidylate kinase family.

The enzyme catalyses dTMP + ATP = dTDP + ADP. Functionally, phosphorylation of dTMP to form dTDP in both de novo and salvage pathways of dTTP synthesis. This chain is Thymidylate kinase, found in Burkholderia vietnamiensis (strain G4 / LMG 22486) (Burkholderia cepacia (strain R1808)).